Here is a 154-residue protein sequence, read N- to C-terminus: PTS system glucose-specific EIIA component (154 aa).

Residues 26-130 (DEVFKERMLG…SIKSPIIFTN (105 aa)) enclose the PTS EIIA type-1 domain. Zn(2+)-binding residues include His63 and His78. His78 acts as the Tele-phosphohistidine intermediate; for EIIA activity in catalysis. The residue at position 78 (His78) is a Phosphohistidine; by HPr.

As to quaternary structure, heterodimer with glycerol kinase (glpk). Zn(2+) serves as cofactor.

The protein localises to the cytoplasm. The phosphoenolpyruvate-dependent sugar phosphotransferase system (sugar PTS), a major carbohydrate active transport system, catalyzes the phosphorylation of incoming sugar substrates concomitantly with their translocation across the cell membrane. The enzyme II complex composed of PtsG and Crr is involved in glucose transport. The protein is PTS system glucose-specific EIIA component (crr) of Mycoplasma capricolum subsp. capricolum (strain California kid / ATCC 27343 / NCTC 10154).